We begin with the raw amino-acid sequence, 752 residues long: THO complex subunit HPR1 (752 aa).

Serine 234 is subject to Phosphoserine. The tract at residues 648–752 (RKKRALEEEA…SNGSSTQDMK (105 aa)) is disordered. A compositionally biased stretch (basic and acidic residues) spans 692-702 (EISEENTKIKS). A compositionally biased stretch (polar residues) spans 720–752 (PQNTTAQLENPKTEDNNAATSNISNGSSTQDMK).

In terms of assembly, component of the THO complex, which is composed of HPR1, MFT1, THO2 and THP2. Together with SUB2, TEX1 and YRA1, THO forms the transcription/export (TREX) complex. THO associates with DNA and RNA in vitro.

It localises to the nucleus. Its function is as follows. Component the THO subcomplex of the TREX complex, which operates in coupling transcription elongation to mRNA export. The THO complex is recruited to transcribed genes and moves along the gene with the elongating polymerase during transcription. THO is important for stabilizing nascent RNA in the RNA polymerase II elongation complex by preventing formation of DNA:RNA hybrids behind the elongating polymerase. It functions in cotranscriptional formation of an export-competent messenger ribonucleoprotein particle (mRNP) by facilitating the loading of ATP-dependent RNA helicase SUB2 and the mRNA export factor YRA1 along the nascent mRNA. The protein is THO complex subunit HPR1 (HPR1) of Saccharomyces cerevisiae (strain ATCC 204508 / S288c) (Baker's yeast).